A 341-amino-acid chain; its full sequence is Methionine import ATP-binding protein MetN 2 (341 aa).

The ABC transporter domain occupies 2 to 241 (IEASELTKVY…PKAPLTQEFI (240 aa)). 38–45 (GYSGAGKS) lines the ATP pocket.

Belongs to the ABC transporter superfamily. Methionine importer (TC 3.A.1.24) family. In terms of assembly, the complex is composed of two ATP-binding proteins (MetN), two transmembrane proteins (MetI) and a solute-binding protein (MetQ).

The protein resides in the cell membrane. It catalyses the reaction L-methionine(out) + ATP + H2O = L-methionine(in) + ADP + phosphate + H(+). The enzyme catalyses D-methionine(out) + ATP + H2O = D-methionine(in) + ADP + phosphate + H(+). Part of the ABC transporter complex MetNIQ involved in methionine import. Responsible for energy coupling to the transport system. The polypeptide is Methionine import ATP-binding protein MetN 2 (Shouchella clausii (strain KSM-K16) (Alkalihalobacillus clausii)).